The sequence spans 101 residues: MMTEYVLILSAYLFSIGIYGLITSRNMVRALMCLELILNAVNMNLVTFSDLFDSRQLKGDIFSIFVIAIAAAEAAIGPAIVSSIHRNRKSTRINQSNLLNK.

Helical transmembrane passes span 2-22 (MTEYVLILSAYLFSIGIYGLI), 32-52 (MCLELILNAVNMNLVTFSDLF), and 61-81 (IFSIFVIAIAAAEAAIGPAIV).

The protein belongs to the complex I subunit 4L family. NDH is composed of at least 16 different subunits, 5 of which are encoded in the nucleus.

The protein resides in the plastid. It is found in the chloroplast thylakoid membrane. It carries out the reaction a plastoquinone + NADH + (n+1) H(+)(in) = a plastoquinol + NAD(+) + n H(+)(out). The catalysed reaction is a plastoquinone + NADPH + (n+1) H(+)(in) = a plastoquinol + NADP(+) + n H(+)(out). In terms of biological role, NDH shuttles electrons from NAD(P)H:plastoquinone, via FMN and iron-sulfur (Fe-S) centers, to quinones in the photosynthetic chain and possibly in a chloroplast respiratory chain. The immediate electron acceptor for the enzyme in this species is believed to be plastoquinone. Couples the redox reaction to proton translocation, and thus conserves the redox energy in a proton gradient. The chain is NAD(P)H-quinone oxidoreductase subunit 4L, chloroplastic from Calycanthus floridus var. glaucus (Eastern sweetshrub).